Consider the following 317-residue polypeptide: R-spondin-3 (317 aa).

The first 20 residues, 1-20 (MQLQLISIVLILHFMEYTNC), serve as a signal peptide directing secretion. FU repeat units follow at residues 34–86 (SGVS…GFYG), 92–135 (RNDC…GLVP), and 139–183 (KKEC…EFEP). 11 cysteine pairs are disulfide-bonded: cysteine 41–cysteine 48, cysteine 45–cysteine 54, cysteine 57–cysteine 76, cysteine 80–cysteine 95, cysteine 98–cysteine 105, cysteine 102–cysteine 111, cysteine 114–cysteine 125, cysteine 129–cysteine 189, cysteine 195–cysteine 237, cysteine 206–cysteine 213, and cysteine 246–cysteine 253. The N-linked (GlcNAc...) asparagine glycan is linked to asparagine 184. In terms of domain architecture, TSP type-1 spans 194–254 (HCEVSEWSEW…ECFVKKKRCK (61 aa)). The span at 251-268 (KRCKPPKGQRRGEKKKRF) shows a compositional bias: basic residues. Positions 251 to 317 (KRCKPPKGQR…RDQSRDAGTV (67 aa)) are disordered. The span at 274-303 (VTAEARRERKREREKETIDREESENRNKTE) shows a compositional bias: basic and acidic residues. An N-linked (GlcNAc...) asparagine glycan is attached at asparagine 300.

It belongs to the R-spondin family. As to quaternary structure, binds heparin.

Its subcellular location is the secreted. Functionally, activator of the canonical Wnt signaling pathway by acting as a ligand for lgr4-6 receptors, which acts as a key regulator of angiogenesis. Upon binding to lgr4-6 (lgr4, lgr5 or lgr6), lgr4-6 associate with phosphorylated lrp6 and frizzled receptors that are activated by extracellular Wnt receptors, triggering the canonical Wnt signaling pathway to increase expression of target genes. Acts both in the canonical. Wnt/beta-catenin-dependent pathway and in non-canonical Wnt signaling pathway. Acts as a key regulator of angiogenesis by controlling vascular stability and pruning: acts by activating the non-canonical Wnt signaling pathway in endothelial cells. Can also amplify Wnt signaling pathway independently of LGR4-6 receptors, possibly by acting as a direct antagonistic ligand to RNF43 and ZNRF3. The chain is R-spondin-3 (rspo3) from Danio rerio (Zebrafish).